The following is a 217-amino-acid chain: GTPase IMAP family member GIMD1 (217 aa).

Positions 6 to 217 (KMIINLALFG…ENCYQVLTFK (212 aa)) constitute an AIG1-type G domain. GTP is bound by residues 15–23 (GMTQSGKSS), Ser-36, and 148–150 (HAE).

Belongs to the TRAFAC class TrmE-Era-EngA-EngB-Septin-like GTPase superfamily. AIG1/Toc34/Toc159-like paraseptin GTPase family. IAN subfamily.

In Homo sapiens (Human), this protein is GTPase IMAP family member GIMD1 (GIMD1).